Here is a 465-residue protein sequence, read N- to C-terminus: G1/S-specific cyclin CLN2 (465 aa).

The protein belongs to the cyclin family.

Functionally, essential for the control of the cell cycle at the G1/S (start) transition. Interacts with the CDC28 protein kinase to form MPF. This is G1/S-specific cyclin CLN2 (CLN2) from Candida albicans (Yeast).